The sequence spans 510 residues: ATP synthase subunit alpha (510 aa).

169–176 (GDRQTGKT) is an ATP binding site.

The protein belongs to the ATPase alpha/beta chains family. F-type ATPases have 2 components, CF(1) - the catalytic core - and CF(0) - the membrane proton channel. CF(1) has five subunits: alpha(3), beta(3), gamma(1), delta(1), epsilon(1). CF(0) has four main subunits: a(1), b(1), b'(1) and c(9-12).

Its subcellular location is the cell inner membrane. It carries out the reaction ATP + H2O + 4 H(+)(in) = ADP + phosphate + 5 H(+)(out). Its function is as follows. Produces ATP from ADP in the presence of a proton gradient across the membrane. The alpha chain is a regulatory subunit. The protein is ATP synthase subunit alpha of Rhodopseudomonas palustris (strain BisB18).